The primary structure comprises 264 residues: Sexual differentiation protein ste4 (264 aa).

In terms of domain architecture, SAM spans 11–73 (WNNEAVCNWI…LSAIQSMKKQ (63 aa)). The interval 111 to 139 (LEKRVEYLETENTKLVKTLNSLNSEFLQL) is leucine-zipper. Positions 176–264 (GSFDLEVNDS…PSFVLSRRSC (89 aa)) constitute a Ras-associating domain.

In terms of assembly, homodimer or heterodimer with another leucine-zipper protein.

In terms of biological role, essential for mating and meiosis. This chain is Sexual differentiation protein ste4 (ste4), found in Schizosaccharomyces pombe (strain 972 / ATCC 24843) (Fission yeast).